The following is a 361-amino-acid chain: MAGNTIGQLFRVTTFGESHGLALGCIVDGVPPGIPLTEADLQHDLDRRRPGTSRYTTQRREPDQVKILSGIFEGVTTGTSIGLLIENTDQRSQDYSAIKDVFRPGHADYTYEQKYGLRDYRGGGRSSARETAMRVAAGAIAKKYLAEKFGIEIRGCLTQMGDIPLEIKDWSQVEQNPFFCPDPDKIDALDELMRALKKEGDSIGAKVTVVASGVPAGLGEPVFDRLDADIAHALMSINAVKGVEIGDGFDVVALRGSQNRDEITKDGFQSNHAGGILGGISSGQQIIAHMALKPTSSITVPGRTINRFGEEVEMITKGRHDPCVGIRAVPIAEAMLAIVLMDHLLRQRAQNADVKTDIPRW.

NADP(+)-binding residues include arginine 48 and arginine 54. Residues 125 to 127, 238 to 239, glycine 278, 293 to 297, and arginine 319 contribute to the FMN site; these read RSS, NA, and KPTSS.

The protein belongs to the chorismate synthase family. As to quaternary structure, homotetramer. Requires FMNH2 as cofactor.

The catalysed reaction is 5-O-(1-carboxyvinyl)-3-phosphoshikimate = chorismate + phosphate. It participates in metabolic intermediate biosynthesis; chorismate biosynthesis; chorismate from D-erythrose 4-phosphate and phosphoenolpyruvate: step 7/7. Catalyzes the anti-1,4-elimination of the C-3 phosphate and the C-6 proR hydrogen from 5-enolpyruvylshikimate-3-phosphate (EPSP) to yield chorismate, which is the branch point compound that serves as the starting substrate for the three terminal pathways of aromatic amino acid biosynthesis. This reaction introduces a second double bond into the aromatic ring system. This chain is Chorismate synthase, found in Escherichia coli O7:K1 (strain IAI39 / ExPEC).